Reading from the N-terminus, the 133-residue chain is ATP synthase epsilon chain (133 aa).

The protein belongs to the ATPase epsilon chain family. F-type ATPases have 2 components, CF(1) - the catalytic core - and CF(0) - the membrane proton channel. CF(1) has five subunits: alpha(3), beta(3), gamma(1), delta(1), epsilon(1). CF(0) has three main subunits: a, b and c.

Its subcellular location is the cell membrane. Its function is as follows. Produces ATP from ADP in the presence of a proton gradient across the membrane. The protein is ATP synthase epsilon chain of Bacillus cytotoxicus (strain DSM 22905 / CIP 110041 / 391-98 / NVH 391-98).